Here is a 618-residue protein sequence, read N- to C-terminus: Indolepyruvate oxidoreductase subunit IorA (618 aa).

2 consecutive 4Fe-4S ferredoxin-type domains span residues 559–590 (RPVR…DGRV) and 588–617 (GRVF…PEGK). Positions 568, 571, 574, 580, 597, 600, 603, and 607 each coordinate [4Fe-4S] cluster.

Heterodimer of the IorA and IorB subunits. It depends on [4Fe-4S] cluster as a cofactor.

It carries out the reaction indole-3-pyruvate + 2 oxidized [2Fe-2S]-[ferredoxin] + CoA = (indol-3-yl)acetyl-CoA + 2 reduced [2Fe-2S]-[ferredoxin] + CO2 + H(+). Catalyzes the ferredoxin-dependent oxidative decarboxylation of arylpyruvates. This Methanothermobacter marburgensis (strain ATCC BAA-927 / DSM 2133 / JCM 14651 / NBRC 100331 / OCM 82 / Marburg) (Methanobacterium thermoautotrophicum) protein is Indolepyruvate oxidoreductase subunit IorA (iorA).